A 435-amino-acid polypeptide reads, in one-letter code: Chromatin structure-remodeling complex subunit RSC7 (435 aa).

Residues 1–97 (MSDSEGGLAS…DKGVTRSRNR (97 aa)) are disordered. Acidic residues predominate over residues 30-66 (DTEDLDIDENDENEDDDYREEEANEGVNEEEISDEEE). Ser-86 carries the post-translational modification Phosphoserine. The interval 248–435 (ELRTKGNVIE…QNFEKCNEYI (188 aa)) is functional region; able to complement all NPL6 null allele phenotypes.

This sequence belongs to the RSC7/SWP82 family. RSC7 subfamily. Interacts with ARP7, ARP9, RSC3, RSC8, RSC30 and STH1. Component of the two forms of the RSC complex composed of at least either RSC1 or RSC2, and ARP7, ARP9, LDB7, NPL6, RSC3, RSC30, RSC4, RSC58, RSC6, RSC8, RSC9, SFH1, STH1, HTL1 and probably RTT102. The complexes interact with histone and histone variant components of centromeric chromatin. Component of a fungal-specific module (HTL1-LDB7-NPL6-RSC3-RSC30) within the RSC complex.

It localises to the nucleus. Component of the chromatin structure remodeling complex (RSC), which is involved in transcription regulation and nucleosome positioning. RSC is responsible for the transfer of a histone octamer from a nucleosome core particle to naked DNA. The reaction requires ATP and involves an activated RSC-nucleosome intermediate. Remodeling reaction also involves DNA translocation, DNA twist and conformational change. As a reconfigurer of centromeric and flanking nucleosomes, RSC complex is required both for proper kinetochore function in chromosome segregation and, via a PKC1-dependent signaling pathway, for organization of the cellular cytoskeleton. Together with HTL1, LDB7, RSC3, RSC30 components, defines a fungal-specific module within the RSC complex that plays a role in many cellular functions including the maintenance of cell wall integrity. Acidic protein important for nuclear protein localization. This chain is Chromatin structure-remodeling complex subunit RSC7 (NPL6), found in Saccharomyces cerevisiae (strain ATCC 204508 / S288c) (Baker's yeast).